The primary structure comprises 139 residues: ATP synthase epsilon chain (139 aa).

Belongs to the ATPase epsilon chain family. F-type ATPases have 2 components, CF(1) - the catalytic core - and CF(0) - the membrane proton channel. CF(1) has five subunits: alpha(3), beta(3), gamma(1), delta(1), epsilon(1). CF(0) has three main subunits: a, b and c.

It is found in the cell inner membrane. Its function is as follows. Produces ATP from ADP in the presence of a proton gradient across the membrane. This is ATP synthase epsilon chain from Enterobacter sp. (strain 638).